A 412-amino-acid polypeptide reads, in one-letter code: Gamma-glutamyl phosphate reductase (412 aa).

Belongs to the gamma-glutamyl phosphate reductase family.

Its subcellular location is the cytoplasm. It carries out the reaction L-glutamate 5-semialdehyde + phosphate + NADP(+) = L-glutamyl 5-phosphate + NADPH + H(+). Its pathway is amino-acid biosynthesis; L-proline biosynthesis; L-glutamate 5-semialdehyde from L-glutamate: step 2/2. Functionally, catalyzes the NADPH-dependent reduction of L-glutamate 5-phosphate into L-glutamate 5-semialdehyde and phosphate. The product spontaneously undergoes cyclization to form 1-pyrroline-5-carboxylate. The chain is Gamma-glutamyl phosphate reductase from Actinobacillus pleuropneumoniae serotype 7 (strain AP76).